A 230-amino-acid chain; its full sequence is Flagellar L-ring protein (230 aa).

An N-terminal signal peptide occupies residues 1 to 26 (MKQVRLLPSATVRAACAVAVAAFAAG). Cys27 carries the N-palmitoyl cysteine lipid modification. A lipid anchor (S-diacylglycerol cysteine) is attached at Cys27.

Belongs to the FlgH family. As to quaternary structure, the basal body constitutes a major portion of the flagellar organelle and consists of four rings (L,P,S, and M) mounted on a central rod.

It is found in the cell outer membrane. The protein localises to the bacterial flagellum basal body. Functionally, assembles around the rod to form the L-ring and probably protects the motor/basal body from shearing forces during rotation. The sequence is that of Flagellar L-ring protein from Burkholderia lata (strain ATCC 17760 / DSM 23089 / LMG 22485 / NCIMB 9086 / R18194 / 383).